The primary structure comprises 365 residues: 3-methyl-L-tyrosine peroxygenase (365 aa).

Residue 313–317 (HIGVC) participates in heme binding.

Requires heme as cofactor.

It catalyses the reaction 3-methyl-L-tyrosine + H2O2 = 5-hydroxy-3-methyl-L-tyrosine + H2O. The protein operates within antibiotic biosynthesis. Its function is as follows. Heme-containing peroxygenase that mediates the hydroxylation of 3-methyl-L-tyrosine (3-Me-Tyr) into 3-hydroxy-5-methyl-L-tyrosine (3-OH-5-Me-Tyr) in biosynthesis of saframycin A, a potent antitumor antibiotic that belongs to the tetrahydroisoquinoline family. Involved in biosynthesis of 3-hydroxy-5-methyl-O-methyltyrosine (3-OH-5-Me-OMe-Tyr), a core structure of saframycin A. The sequence is that of 3-methyl-L-tyrosine peroxygenase from Streptomyces lavendulae.